A 264-amino-acid chain; its full sequence is Synaptophysin-like protein 2 (264 aa).

Topologically, residues 1–33 (MSSTESPSRAADKSPRQQVDRLLEGLRWRRLEE) are cytoplasmic. In terms of domain architecture, MARVEL spans 30–238 (RLEEPLGFIK…NCWFVFKETP (209 aa)). The chain crosses the membrane as a helical span at residues 34–54 (PLGFIKVLQWLFAIFAFGSCG). The Vesicular portion of the chain corresponds to 55 to 116 (SYSGETGAMV…LMGDFSAPAE (62 aa)). Residues 117–137 (FFVTLGIFSFFYTMAALVVYL) form a helical membrane-spanning segment. Residues 138–150 (RFHKLYTENKRFP) lie on the Cytoplasmic side of the membrane. A helical membrane pass occupies residues 151 to 171 (LVDFCVTVSFTFFWLVAAAAW). The Vesicular portion of the chain corresponds to 172 to 213 (GKGLTDVKGATRPSSLTAAMSVCHGEEAVCSAGATPSMGLAN). N-linked (GlcNAc...) asparagine glycosylation is present at Asn-213. Residues 214-234 (ISVLFGFINFFLWAGNCWFVF) form a helical membrane-spanning segment. Topologically, residues 235 to 264 (KETPWHGQGQDQGQGPSQESAAEQGAVEKQ) are cytoplasmic. The disordered stretch occupies residues 242–264 (QGQDQGQGPSQESAAEQGAVEKQ).

This sequence belongs to the synaptophysin/synaptobrevin family. In terms of tissue distribution, skeletal muscle.

The protein resides in the membrane. In terms of biological role, involved in communication between the T-tubular and junctional sarcoplasmic reticulum (SR) membranes. The protein is Synaptophysin-like protein 2 (SYPL2) of Oryctolagus cuniculus (Rabbit).